A 153-amino-acid polypeptide reads, in one-letter code: Two-component response regulator ARR17 (153 aa).

The 129-residue stretch at 21-149 (HVLAVDDNLI…DVEKLKCHLL (129 aa)) folds into the Response regulatory domain. At Asp-82 the chain carries 4-aspartylphosphate.

The protein belongs to the ARR family. Type-A subfamily. Post-translationally, two-component system major event consists of a His-to-Asp phosphorelay between a sensor histidine kinase (HK) and a response regulator (RR). In plants, the His-to-Asp phosphorelay involves an additional intermediate named Histidine-containing phosphotransfer protein (HPt). This multistep phosphorelay consists of a His-Asp-His-Asp sequential transfer of a phosphate group between first a His and an Asp of the HK protein, followed by the transfer to a conserved His of the HPt protein and finally the transfer to an Asp in the receiver domain of the RR protein.

The protein resides in the nucleus. In terms of biological role, functions as a response regulator involved in His-to-Asp phosphorelay signal transduction system. Phosphorylation of the Asp residue in the receiver domain activates the ability of the protein to promote the transcription of target genes. Type-A response regulators seem to act as negative regulators of the cytokinin signaling. The protein is Two-component response regulator ARR17 (ARR17) of Arabidopsis thaliana (Mouse-ear cress).